We begin with the raw amino-acid sequence, 384 residues long: MNATGTPVAPESCQQLAAGGHSRLIVLHYNHSGRLAGRGGPEDGGLGALRGLSVAASCLVVLENLLVLAAITSHMRSRRWVYYCLVNITLSDLLTGAAYLANVLLSGARTFRLAPAQWFLREGLLFTALAASTFSLLFTAGERFATMVRPVAESGATKTSRVYGFIGLCWLLAALLGMLPLLGWNCLCAFDRCSSLLPLYSKRYILFCLVIFAGVLATIMGLYGAIFRLVQASGQKAPRPAARRKARRLLKTVLMILLAFLVCWGPLFGLLLADVFGSNLWAQEYLRGMDWILALAVLNSAVNPIIYSFRSREVCRAVLSFLCCGCLRLGMRGPGDCLARAVEAHSGASTTDSSLRPRDSFRGSRSLSFRMREPLSSISSVRSI.

Residues 1-50 are Extracellular-facing; that stretch reads MNATGTPVAPESCQQLAAGGHSRLIVLHYNHSGRLAGRGGPEDGGLGALR. Asparagine 2 and asparagine 30 each carry an N-linked (GlcNAc...) asparagine glycan. The helical transmembrane segment at 51-71 threads the bilayer; it reads GLSVAASCLVVLENLLVLAAI. At 72 to 84 the chain is on the cytoplasmic side; the sequence is TSHMRSRRWVYYC. Residues 85–105 form a helical membrane-spanning segment; the sequence is LVNITLSDLLTGAAYLANVLL. Over 106–117 the chain is Extracellular; it reads SGARTFRLAPAQ. The chain crosses the membrane as a helical span at residues 118 to 138; it reads WFLREGLLFTALAASTFSLLF. At 139–161 the chain is on the cytoplasmic side; it reads TAGERFATMVRPVAESGATKTSR. Residues 162 to 182 traverse the membrane as a helical segment; sequence VYGFIGLCWLLAALLGMLPLL. The Extracellular segment spans residues 183–206; sequence GWNCLCAFDRCSSLLPLYSKRYIL. The helical transmembrane segment at 207–227 threads the bilayer; the sequence is FCLVIFAGVLATIMGLYGAIF. Topologically, residues 228 to 252 are cytoplasmic; it reads RLVQASGQKAPRPAARRKARRLLKT. The chain crosses the membrane as a helical span at residues 253–273; the sequence is VLMILLAFLVCWGPLFGLLLA. The Extracellular segment spans residues 274–288; it reads DVFGSNLWAQEYLRG. Residues 289 to 309 traverse the membrane as a helical segment; the sequence is MDWILALAVLNSAVNPIIYSF. Topologically, residues 310-384 are cytoplasmic; sequence RSREVCRAVL…LSSISSVRSI (75 aa). The S-palmitoyl cysteine moiety is linked to residue cysteine 323.

It belongs to the G-protein coupled receptor 1 family. Specifically expressed in fetal and adult lymphoid and hematopoietic tissue as well as in lung. Considerable level of expression in adult and fetal spleen as well as adult peripheral leukocytes and lung. Lower expression in adult thymus, lymph node, bone marrow, and appendix as well as in fetal liver, thymus, and lung.

It localises to the cell membrane. In terms of biological role, receptor for the lysosphingolipid sphingosine 1-phosphate (S1P). S1P is a bioactive lysophospholipid that elicits diverse physiological effect on most types of cells and tissues. May be involved in cell migration processes that are specific for lymphocytes. This chain is Sphingosine 1-phosphate receptor 4 (S1PR4), found in Homo sapiens (Human).